Reading from the N-terminus, the 486-residue chain is Protein nucleotidyltransferase YdiU (486 aa).

Residues glycine 90, glycine 92, arginine 93, lysine 113, aspartate 125, glycine 126, arginine 176, and arginine 183 each contribute to the ATP site. Residue aspartate 252 is the Proton acceptor of the active site. 2 residues coordinate Mg(2+): asparagine 253 and aspartate 262. Aspartate 262 is an ATP binding site.

It belongs to the SELO family. Mg(2+) is required as a cofactor. Requires Mn(2+) as cofactor.

It catalyses the reaction L-seryl-[protein] + ATP = 3-O-(5'-adenylyl)-L-seryl-[protein] + diphosphate. It carries out the reaction L-threonyl-[protein] + ATP = 3-O-(5'-adenylyl)-L-threonyl-[protein] + diphosphate. The catalysed reaction is L-tyrosyl-[protein] + ATP = O-(5'-adenylyl)-L-tyrosyl-[protein] + diphosphate. The enzyme catalyses L-histidyl-[protein] + UTP = N(tele)-(5'-uridylyl)-L-histidyl-[protein] + diphosphate. It catalyses the reaction L-seryl-[protein] + UTP = O-(5'-uridylyl)-L-seryl-[protein] + diphosphate. It carries out the reaction L-tyrosyl-[protein] + UTP = O-(5'-uridylyl)-L-tyrosyl-[protein] + diphosphate. In terms of biological role, nucleotidyltransferase involved in the post-translational modification of proteins. It can catalyze the addition of adenosine monophosphate (AMP) or uridine monophosphate (UMP) to a protein, resulting in modifications known as AMPylation and UMPylation. The polypeptide is Protein nucleotidyltransferase YdiU (Pseudomonas entomophila (strain L48)).